Reading from the N-terminus, the 176-residue chain is Peptide methionine sulfoxide reductase MsrA (176 aa).

Residue cysteine 10 is part of the active site.

This sequence belongs to the MsrA Met sulfoxide reductase family.

It carries out the reaction L-methionyl-[protein] + [thioredoxin]-disulfide + H2O = L-methionyl-(S)-S-oxide-[protein] + [thioredoxin]-dithiol. The catalysed reaction is [thioredoxin]-disulfide + L-methionine + H2O = L-methionine (S)-S-oxide + [thioredoxin]-dithiol. Functionally, has an important function as a repair enzyme for proteins that have been inactivated by oxidation. Catalyzes the reversible oxidation-reduction of methionine sulfoxide in proteins to methionine. The sequence is that of Peptide methionine sulfoxide reductase MsrA from Sulfolobus acidocaldarius (strain ATCC 33909 / DSM 639 / JCM 8929 / NBRC 15157 / NCIMB 11770).